We begin with the raw amino-acid sequence, 955 residues long: Probable autotransporter YcgV (955 aa).

The tract at residues 616–659 (ASGTVPEPTPNPEPTPAPAQPPIVNPDPTPEPAPTPKPTTTADA) is disordered. A compositionally biased stretch (pro residues) spans 622–652 (EPTPNPEPTPAPAQPPIVNPDPTPEPAPTPK). An Autotransporter domain is found at 687–955 (NQSKDGNIWL…QVNGGYRFSF (269 aa)).

Functionally, upon overexpression shows increased adherence to polyvinyl chloride (PVC) plates, increased mature biofilm formation. This chain is Probable autotransporter YcgV (ycgV), found in Escherichia coli (strain K12).